A 172-amino-acid chain; its full sequence is NADH-ubiquinone oxidoreductase chain 6 (172 aa).

5 helical membrane passes run 1–21, 27–47, 48–68, 87–107, and 138–158; these read MTYFVLFLGLCFVLGGLAVAS, YGVVGLVLASVAGCGWLLSLG, ISFVSLVLFMVYLGGMLVVFV, VVGYGMGFVAVLVAGVVVGGF, and CGVGMFLAAGWGLLLTLFVVL.

It belongs to the complex I subunit 6 family.

The protein resides in the mitochondrion membrane. The enzyme catalyses a ubiquinone + NADH + 5 H(+)(in) = a ubiquinol + NAD(+) + 4 H(+)(out). In terms of biological role, core subunit of the mitochondrial membrane respiratory chain NADH dehydrogenase (Complex I) that is believed to belong to the minimal assembly required for catalysis. Complex I functions in the transfer of electrons from NADH to the respiratory chain. The immediate electron acceptor for the enzyme is believed to be ubiquinone. The sequence is that of NADH-ubiquinone oxidoreductase chain 6 (MT-ND6) from Uria aalge (Common mure).